The primary structure comprises 1060 residues: Protocadherin-1 (1060 aa).

Residues 1 to 57 (MDSGAGGRRCPEAALLILGPPRMEHLRHSPGPGGQRLLLPSMLLALLLLLAPSPGHA) form the signal peptide. Cadherin domains are found at residues 58-168 (TRVV…TPNF), 169-280 (ASPV…APKF), 281-387 (ERPS…APTI), 396-506 (THQD…APVF), 507-612 (TQSV…DPKF), 613-715 (MLSG…APYI), and 718-844 (PSNT…DPEY). Over 58–852 (TRVVYKVPEE…EYERSKQRGN (795 aa)) the chain is Extracellular. 2 N-linked (GlcNAc...) asparagine glycosylation sites follow: Asn-305 and Asn-403. N-linked (GlcNAc...) asparagine glycans are attached at residues Asn-618, Asn-662, Asn-813, and Asn-818. A helical transmembrane segment spans residues 853–873 (ILFGVVAGVVAVALLIALAVL). Over 874-1060 (VRYCRQREAK…HGAIWTEVWE (187 aa)) the chain is Cytoplasmic. The segment covering 884 to 897 (SGYQAGKKETKDLY) has biased composition (basic and acidic residues). The interval 884–1045 (SGYQAGKKET…QPFQLSTPQP (162 aa)) is disordered. The span at 907-920 (KGNKSKGKKSKSPK) shows a compositional bias: basic residues. Residues Ser-918, Ser-949, Ser-962, and Ser-984 each carry the phosphoserine modification. A compositionally biased stretch (low complexity) spans 973 to 986 (SPLPSIQLQPQSPS). Composition is skewed to polar residues over residues 1003–1024 (FVGT…SYRT) and 1033–1043 (QVGQPFQLSTP).

In terms of tissue distribution, highly expressed in the brain and neuro-glial cells.

It is found in the cell junction. It localises to the cell membrane. May be involved in cell-cell interaction processes and in cell adhesion. The chain is Protocadherin-1 (PCDH1) from Homo sapiens (Human).